Here is a 502-residue protein sequence, read N- to C-terminus: Reduced meiotic recombination protein C1442.04c (502 aa).

Residues serine 328, serine 330, and serine 331 each carry the phosphoserine modification. Disordered stretches follow at residues 353-391 (NDLN…LRDN), 420-440 (GSLN…ENVD), and 454-502 (ESAF…PSDD). Residues 367-378 (DGSEIITLDEND) are compositionally biased toward acidic residues. Polar residues-rich tracts occupy residues 420-436 (GSLN…TNDG) and 462-477 (GTIN…TTDT).

It belongs to the RMR1 family.

Its subcellular location is the cytoplasm. The protein resides in the nucleus. Its function is as follows. Required for normal levels of gene conversion events during meiosis. The polypeptide is Reduced meiotic recombination protein C1442.04c (Schizosaccharomyces pombe (strain 972 / ATCC 24843) (Fission yeast)).